The sequence spans 782 residues: MTATSPFSPQEIAAEGIKPEEYAEIVRRLGRHPNKAELGMFGVMWSEHCCYKNSRPLLKQFPTTGPRILVGPGENAGVVDLGEGLQLAFKIESHNHPSAVEPFQGAATGVGGILRDIFTMGARPIALLNSLRFGSLEDPKTQRLFSGVVAGISHYGNCVGVPTVGGEVYFDPAYSGNPLVNVMALGLMETPEIVKSGAAGIGNPVLYVGSTTGRDGMGGASFASAELSDESIDDRPAVQVGDPFLEKSLIEACLEAFKTGAVVAAQDMGAAGITCSTSEMAAKGGVGIELDLDKIPVRETRMVPYEYLLSESQERMLFVAHQGREQELIDIFHRWGLQAVVAGTVIAEPIVRIFFQGAIAAEIPADALAENTPLYERELLAEPPEYARLAWEWSSEALPTGTTAGIEIQGNLHSWQDILLTLLNTPTIASKNWVYRQYDHQVQNNTVFLPGGADAAVVRLRPLEGQGSRGAGEQGGVNSLSGVAATVDCNPRYVYLDPYEGAKAVVAEAARNLSCVGAEPLAVTDNLNFGSPEKPIGYWQLSEACRGLAEGCRELATPVTGGNVSLYNETFDTQGNPQPIYPTPVVGMVGLIADLTKICGQGWQGVGDVIYLLGASITTLGASEYLATIHNTVAGRPPRVDFDLERRVQKVCREGIHAGSVRSAHDCAEGGLAVALAESCLAGNLGAEIHLEVSPTQLQRLDEVLFGEGGARILVSVVSTQQATWESYLQEHLGQNWQKLGIVGNTDTDLAVLTTDNQTLIRVSIEEMNDRYQNAIARRLAL.

Histidine 48 is an active-site residue. Positions 51 and 90 each coordinate ATP. Glutamate 92 serves as a coordination point for Mg(2+). Residues 93-96 (SHNH) and arginine 115 contribute to the substrate site. Histidine 94 functions as the Proton acceptor in the catalytic mechanism. Aspartate 116 contributes to the Mg(2+) binding site. Glutamine 239 is a binding site for substrate. Mg(2+) is bound at residue aspartate 267. Residue 311–313 (ESQ) participates in substrate binding. ATP contacts are provided by aspartate 525 and glycine 562. Position 563 (asparagine 563) interacts with Mg(2+). Position 565 (serine 565) interacts with substrate.

Belongs to the FGAMS family. As to quaternary structure, monomer. Part of the FGAM synthase complex composed of 1 PurL, 1 PurQ and 2 PurS subunits.

The protein resides in the cytoplasm. The enzyme catalyses N(2)-formyl-N(1)-(5-phospho-beta-D-ribosyl)glycinamide + L-glutamine + ATP + H2O = 2-formamido-N(1)-(5-O-phospho-beta-D-ribosyl)acetamidine + L-glutamate + ADP + phosphate + H(+). The protein operates within purine metabolism; IMP biosynthesis via de novo pathway; 5-amino-1-(5-phospho-D-ribosyl)imidazole from N(2)-formyl-N(1)-(5-phospho-D-ribosyl)glycinamide: step 1/2. Part of the phosphoribosylformylglycinamidine synthase complex involved in the purines biosynthetic pathway. Catalyzes the ATP-dependent conversion of formylglycinamide ribonucleotide (FGAR) and glutamine to yield formylglycinamidine ribonucleotide (FGAM) and glutamate. The FGAM synthase complex is composed of three subunits. PurQ produces an ammonia molecule by converting glutamine to glutamate. PurL transfers the ammonia molecule to FGAR to form FGAM in an ATP-dependent manner. PurS interacts with PurQ and PurL and is thought to assist in the transfer of the ammonia molecule from PurQ to PurL. This Nostoc sp. (strain PCC 7120 / SAG 25.82 / UTEX 2576) protein is Phosphoribosylformylglycinamidine synthase subunit PurL.